Here is a 336-residue protein sequence, read N- to C-terminus: Fructose-1,6-bisphosphatase class 1 (336 aa).

4 residues coordinate Mg(2+): Glu90, Asp112, Leu114, and Asp115. Substrate is bound by residues 115-118 (DGSS), Asn207, and Lys273. A Mg(2+)-binding site is contributed by Glu279.

The protein belongs to the FBPase class 1 family. As to quaternary structure, homotetramer. Requires Mg(2+) as cofactor.

The protein localises to the cytoplasm. It catalyses the reaction beta-D-fructose 1,6-bisphosphate + H2O = beta-D-fructose 6-phosphate + phosphate. The protein operates within carbohydrate biosynthesis; gluconeogenesis. This is Fructose-1,6-bisphosphatase class 1 from Xanthomonas euvesicatoria pv. vesicatoria (strain 85-10) (Xanthomonas campestris pv. vesicatoria).